Here is a 289-residue protein sequence, read N- to C-terminus: Homeobox protein Nkx-2.6 (289 aa).

2 disordered regions span residues 75-125 (GSNP…PQRK) and 259-289 (TPLA…VTAW). Positions 123 to 182 (QRKSRVLFSQAQVLALERRFKQQRYLTAPEREHLASALQLTSTQVKIWFQNRRYKSKSQR) form a DNA-binding region, homeobox. The segment covering 261–274 (LASSGFSPGGQSAA) has biased composition (polar residues).

It belongs to the NK-2 homeobox family. Not detected in any neonate or adult tissues.

The protein localises to the nucleus. Functionally, acts as a transcriptional activator. In conjunction with NKX2-5, may play a role in both pharyngeal and cardiac embryonic development. This chain is Homeobox protein Nkx-2.6 (Nkx2-6), found in Mus musculus (Mouse).